An 84-amino-acid polypeptide reads, in one-letter code: Cytochrome b559 subunit alpha (84 aa).

A helical transmembrane segment spans residues 22-36; the sequence is IIHIPAITILFASGF. H24 serves as a coordination point for heme.

Belongs to the PsbE/PsbF family. In terms of assembly, heterodimer of an alpha subunit and a beta subunit. PSII is composed of 1 copy each of membrane proteins PsbA, PsbB, PsbC, PsbD, PsbE, PsbF, PsbH, PsbI, PsbJ, PsbK, PsbL, PsbM, PsbT, PsbX, Psb30/Ycf12, peripheral proteins PsbO, CyanoQ (PsbQ), PsbU, PsbV and a large number of cofactors. It forms dimeric complexes. Requires heme b as cofactor.

It localises to the cell inner membrane. Its function is as follows. This b-type cytochrome is tightly associated with the reaction center of photosystem II (PSII). PSII is a light-driven water:plastoquinone oxidoreductase that uses light energy to abstract electrons from H(2)O, generating O(2) and a proton gradient subsequently used for ATP formation. It consists of a core antenna complex that captures photons, and an electron transfer chain that converts photonic excitation into a charge separation. This chain is Cytochrome b559 subunit alpha, found in Gloeobacter violaceus (strain ATCC 29082 / PCC 7421).